The chain runs to 142 residues: Large ribosomal subunit protein uL11 (142 aa).

It belongs to the universal ribosomal protein uL11 family. In terms of assembly, part of the ribosomal stalk of the 50S ribosomal subunit. Interacts with L10 and the large rRNA to form the base of the stalk. L10 forms an elongated spine to which L12 dimers bind in a sequential fashion forming a multimeric L10(L12)X complex. In terms of processing, one or more lysine residues are methylated.

In terms of biological role, forms part of the ribosomal stalk which helps the ribosome interact with GTP-bound translation factors. The chain is Large ribosomal subunit protein uL11 from Hamiltonella defensa subsp. Acyrthosiphon pisum (strain 5AT).